The following is a 288-amino-acid chain: Nucleotide-binding protein APP7_0339 (288 aa).

8–15 lines the ATP pocket; that stretch reads GRSGSGKS. Residue 56 to 59 coordinates GTP; the sequence is DIRN.

The protein belongs to the RapZ-like family.

Functionally, displays ATPase and GTPase activities. The sequence is that of Nucleotide-binding protein APP7_0339 from Actinobacillus pleuropneumoniae serotype 7 (strain AP76).